Reading from the N-terminus, the 221-residue chain is Proline-rich protein 20A (221 aa).

Disordered stretches follow at residues 1-103 and 137-174; these read MEEP…QRQG and SLSETGPPPGTVQEGPGPDVAQPELGFQEPPAAPGPQA. Low complexity predominate over residues 42-53; that stretch reads PAQPAQPAKPIA. Over residues 63-72 the composition is skewed to pro residues; that stretch reads PARPESPPPA. Basic residues predominate over residues 75–93; that stretch reads GRRRGGSRRPGRGRGRRAG.

It belongs to the PRR20 family.

The polypeptide is Proline-rich protein 20A (PRR20A) (Homo sapiens (Human)).